A 397-amino-acid polypeptide reads, in one-letter code: Succinate--CoA ligase [ADP-forming] subunit beta (397 aa).

In terms of domain architecture, ATP-grasp spans 9 to 254 (KALLKGYGAP…ETEEDAKEIE (246 aa)). Residues Lys46, 53–55 (GRG), Glu109, Ala112, and Glu117 each bind ATP. The Mg(2+) site is built by Asn209 and Asp223. Residues Asn274 and 331–333 (GIM) contribute to the substrate site.

This sequence belongs to the succinate/malate CoA ligase beta subunit family. Heterotetramer of two alpha and two beta subunits. It depends on Mg(2+) as a cofactor.

It catalyses the reaction succinate + ATP + CoA = succinyl-CoA + ADP + phosphate. It carries out the reaction GTP + succinate + CoA = succinyl-CoA + GDP + phosphate. It functions in the pathway carbohydrate metabolism; tricarboxylic acid cycle; succinate from succinyl-CoA (ligase route): step 1/1. Functionally, succinyl-CoA synthetase functions in the citric acid cycle (TCA), coupling the hydrolysis of succinyl-CoA to the synthesis of either ATP or GTP and thus represents the only step of substrate-level phosphorylation in the TCA. The beta subunit provides nucleotide specificity of the enzyme and binds the substrate succinate, while the binding sites for coenzyme A and phosphate are found in the alpha subunit. In Rhizobium etli (strain CIAT 652), this protein is Succinate--CoA ligase [ADP-forming] subunit beta.